A 190-amino-acid polypeptide reads, in one-letter code: RNA pyrophosphohydrolase (190 aa).

Residues 6–149 (GYRPNVGIVL…KRGVYARALC (144 aa)) enclose the Nudix hydrolase domain. Positions 38-59 (GGMHSDETPVEAMYRELNEETG) match the Nudix box motif.

The protein belongs to the Nudix hydrolase family. RppH subfamily. A divalent metal cation is required as a cofactor.

Its function is as follows. Accelerates the degradation of transcripts by removing pyrophosphate from the 5'-end of triphosphorylated RNA, leading to a more labile monophosphorylated state that can stimulate subsequent ribonuclease cleavage. The polypeptide is RNA pyrophosphohydrolase (Xylella fastidiosa (strain 9a5c)).